The chain runs to 63 residues: Large ribosomal subunit protein uL29 (63 aa).

It belongs to the universal ribosomal protein uL29 family.

This is Large ribosomal subunit protein uL29 from Flavobacterium johnsoniae (strain ATCC 17061 / DSM 2064 / JCM 8514 / BCRC 14874 / CCUG 350202 / NBRC 14942 / NCIMB 11054 / UW101) (Cytophaga johnsonae).